A 274-amino-acid chain; its full sequence is 4-diphosphocytidyl-2-C-methyl-D-erythritol kinase (274 aa).

Lys-8 is a catalytic residue. 94 to 104 contacts ATP; sequence PSGAGLGGGSA. The active site involves Asp-136.

This sequence belongs to the GHMP kinase family. IspE subfamily.

It catalyses the reaction 4-CDP-2-C-methyl-D-erythritol + ATP = 4-CDP-2-C-methyl-D-erythritol 2-phosphate + ADP + H(+). It participates in isoprenoid biosynthesis; isopentenyl diphosphate biosynthesis via DXP pathway; isopentenyl diphosphate from 1-deoxy-D-xylulose 5-phosphate: step 3/6. Catalyzes the phosphorylation of the position 2 hydroxy group of 4-diphosphocytidyl-2C-methyl-D-erythritol. This Bacteroides fragilis (strain YCH46) protein is 4-diphosphocytidyl-2-C-methyl-D-erythritol kinase.